Consider the following 344-residue polypeptide: Fructose-bisphosphate aldolase (344 aa).

Ser53 lines the D-glyceraldehyde 3-phosphate pocket. The Proton donor role is filled by Asp95. Positions 96, 131, 161, and 212 each coordinate Zn(2+). Gly213 contacts dihydroxyacetone phosphate. Residue His252 participates in Zn(2+) binding. Residues 253–255 and 274–277 each bind dihydroxyacetone phosphate; these read GGS and NVDT.

This sequence belongs to the class II fructose-bisphosphate aldolase family. It depends on Zn(2+) as a cofactor.

It catalyses the reaction beta-D-fructose 1,6-bisphosphate = D-glyceraldehyde 3-phosphate + dihydroxyacetone phosphate. It participates in carbohydrate degradation; glycolysis; D-glyceraldehyde 3-phosphate and glycerone phosphate from D-glucose: step 4/4. In terms of biological role, catalyzes the aldol condensation of dihydroxyacetone phosphate (DHAP or glycerone-phosphate) with glyceraldehyde 3-phosphate (G3P) to form fructose 1,6-bisphosphate (FBP) in gluconeogenesis and the reverse reaction in glycolysis. This is Fructose-bisphosphate aldolase (fba) from Mycobacterium bovis (strain ATCC BAA-935 / AF2122/97).